A 289-amino-acid chain; its full sequence is YLVSPAAYAALGAYMFLLILVGFPVNFLTLYVTLDHKKLRTPLNYILLNLAVADLFMVLGGFTTTMYTSMHGYFVLGRLGCNLEGFFATLGGEIALWSLVVLAIERWIVVCKPISNFRFTEDHAIMGLAFSWVMALTCAVPPLVGWSRYIPEGMQCSCGVDYYTRAEGFNTESFVLYMFTVHFLIPLSVIFFCYGRLLCAVKEAAAAQQESETTQRAEKEVSRMVVLMVIGFLVCWLPYASVAWWIFCNQGSEFGPIFMTLPAFFAKTSAIYNPLIYICMNKQFRHCMI.

At tyrosine 1–alanine 7 the chain is on the extracellular side. Residues tyrosine 8–valine 32 form a helical membrane-spanning segment. Topologically, residues threonine 33 to asparagine 44 are cytoplasmic. A helical membrane pass occupies residues tyrosine 45–tyrosine 67. The Extracellular segment spans residues threonine 68–cysteine 81. The cysteines at positions 81 and 158 are disulfide-linked. The helical transmembrane segment at asparagine 82–isoleucine 104 threads the bilayer. The 'Ionic lock' involved in activated form stabilization motif lies at glutamate 105–tryptophan 107. Residues glutamate 105–histidine 123 lie on the Cytoplasmic side of the membrane. A helical membrane pass occupies residues alanine 124–valine 144. At glycine 145–serine 173 the chain is on the extracellular side. Residues phenylalanine 174–glycine 195 form a helical membrane-spanning segment. Over arginine 196–arginine 223 the chain is Cytoplasmic. The helical transmembrane segment at methionine 224–tryptophan 245 threads the bilayer. Topologically, residues isoleucine 246–isoleucine 257 are extracellular. Residues phenylalanine 258–cysteine 279 traverse the membrane as a helical segment. Position 267 is an N6-(retinylidene)lysine (lysine 267). Residues methionine 280 to isoleucine 289 lie on the Cytoplasmic side of the membrane.

The protein belongs to the G-protein coupled receptor 1 family. Opsin subfamily. Phosphorylated on some or all of the serine and threonine residues present in the C-terminal region. In terms of processing, contains one covalently linked retinal chromophore.

The protein resides in the membrane. It is found in the cell projection. Its subcellular location is the cilium. It localises to the photoreceptor outer segment. In terms of biological role, photoreceptor required for image-forming vision at low light intensity. While most salt water fish species use retinal as chromophore, most freshwater fish use 3-dehydroretinal, or a mixture of retinal and 3-dehydroretinal. Light-induced isomerization of 11-cis to all-trans retinal triggers a conformational change that activates signaling via G-proteins. Subsequent receptor phosphorylation mediates displacement of the bound G-protein alpha subunit by arrestin and terminates signaling. This chain is Rhodopsin (rho), found in Procottus jeittelesii (Red sculpin).